The sequence spans 610 residues: T-cell immunomodulatory protein (610 aa).

A signal peptide spans 1-32; it reads MAAGRLPSARAVLAPLFLGLALLSVGPAPARA. N-linked (GlcNAc...) asparagine glycans are attached at residues Asn-35, Asn-123, Asn-138, Asn-145, Asn-150, Asn-175, and Asn-241. The stretch at 98-135 is one FG-GAP 1; atypical repeat; that stretch reads LVTSVVPGDYDGDSQMDVLLTYFPQNHTNSELGAVIFW. The stretch at 153 to 183 is one FG-GAP 2; atypical repeat; sequence FHDQPLIMDFNGDLIPDVFGITNESSQPQIL. Residues 256–291 form an FG-GAP 3; atypical repeat; sequence VVGQSAFADFDGDGHMDHLLPGCEDKDCQKSAIYLM. Asn-351, Asn-369, and Asn-480 each carry an N-linked (GlcNAc...) asparagine glycan. A helical membrane pass occupies residues 565 to 585; the sequence is VLLTAVALIGVCIFILAIIAI.

The protein belongs to the TIP family. As to quaternary structure, interacts with RUVBL1, RUVBL2 and alpha-tubulin.

It localises to the secreted. Its subcellular location is the membrane. Its function is as follows. Modulator of T-cell function. Has a protective effect in graft versus host disease model. The chain is T-cell immunomodulatory protein from Mus musculus (Mouse).